The following is a 54-amino-acid chain: Pars intercerebralis major peptide D1 (54 aa).

Belongs to the granulin family. Post-translationally, six disulfide bonds are present. In terms of tissue distribution, brain.

Its subcellular location is the secreted. The protein is Pars intercerebralis major peptide D1 of Locusta migratoria (Migratory locust).